Here is a 238-residue protein sequence, read N- to C-terminus: tRNA (guanine-N(1)-)-methyltransferase (238 aa).

Residues G108 and 127-132 each bind S-adenosyl-L-methionine; that span reads LGDFVL.

It belongs to the RNA methyltransferase TrmD family. As to quaternary structure, homodimer.

The protein resides in the cytoplasm. The catalysed reaction is guanosine(37) in tRNA + S-adenosyl-L-methionine = N(1)-methylguanosine(37) in tRNA + S-adenosyl-L-homocysteine + H(+). Its function is as follows. Specifically methylates guanosine-37 in various tRNAs. The sequence is that of tRNA (guanine-N(1)-)-methyltransferase from Streptococcus uberis (strain ATCC BAA-854 / 0140J).